We begin with the raw amino-acid sequence, 120 residues long: MQFEMLYSKIHRAKVSDANLNYVGSITIDKTLAQSANLLAGMKVEIVNINNGERFSTYVIYGDKKGEICLNGAAARKVQIGDIIIIIAYATYTHNELEHYKPTIVQVNESNQILSITNEV.

The active-site Schiff-base intermediate with substrate; via pyruvic acid is Ser25. Ser25 is modified (pyruvic acid (Ser)). Thr57 contacts substrate. The Proton donor role is filled by Tyr58. Residue 72-74 coordinates substrate; sequence GAA.

The protein belongs to the PanD family. Heterooctamer of four alpha and four beta subunits. Pyruvate serves as cofactor. Is synthesized initially as an inactive proenzyme, which is activated by self-cleavage at a specific serine bond to produce a beta-subunit with a hydroxyl group at its C-terminus and an alpha-subunit with a pyruvoyl group at its N-terminus.

It is found in the cytoplasm. The catalysed reaction is L-aspartate + H(+) = beta-alanine + CO2. Its pathway is cofactor biosynthesis; (R)-pantothenate biosynthesis; beta-alanine from L-aspartate: step 1/1. Its function is as follows. Catalyzes the pyruvoyl-dependent decarboxylation of aspartate to produce beta-alanine. This chain is Aspartate 1-decarboxylase, found in Helicobacter hepaticus (strain ATCC 51449 / 3B1).